The primary structure comprises 301 residues: Protease HtpX (301 aa).

The next 2 membrane-spanning stretches (helical) occupy residues 4 to 24 (IGLF…ILSL) and 38 to 58 (LGNL…ISLL). H147 serves as a coordination point for Zn(2+). The active site involves E148. A Zn(2+)-binding site is contributed by H151. 2 consecutive transmembrane segments (helical) span residues 155 to 175 (GDMV…MFFA) and 200 to 220 (FAIT…IVMW). E226 is a binding site for Zn(2+).

This sequence belongs to the peptidase M48B family. It depends on Zn(2+) as a cofactor.

The protein localises to the cell inner membrane. The protein is Protease HtpX of Acinetobacter baylyi (strain ATCC 33305 / BD413 / ADP1).